Here is a 686-residue protein sequence, read N- to C-terminus: Methionine--tRNA ligase (686 aa).

A 'HIGH' region motif is present at residues 15–25 (PYANGPIHLGH). Cys-146, Cys-149, Cys-159, and Cys-162 together coordinate Zn(2+). The short motif at 331 to 335 (KMSKS) is the 'KMSKS' region element. Lys-334 is an ATP binding site. Residues 584-686 (DFAKIDLRVA…AGVKAGSRVM (103 aa)) enclose the tRNA-binding domain.

Belongs to the class-I aminoacyl-tRNA synthetase family. MetG type 1 subfamily. Homodimer. Requires Zn(2+) as cofactor.

Its subcellular location is the cytoplasm. The catalysed reaction is tRNA(Met) + L-methionine + ATP = L-methionyl-tRNA(Met) + AMP + diphosphate. Its function is as follows. Is required not only for elongation of protein synthesis but also for the initiation of all mRNA translation through initiator tRNA(fMet) aminoacylation. This chain is Methionine--tRNA ligase, found in Mannheimia succiniciproducens (strain KCTC 0769BP / MBEL55E).